A 1081-amino-acid polypeptide reads, in one-letter code: FHF complex subunit HOOK-interacting protein 1A (1081 aa).

4 disordered regions span residues 474–496, 544–623, 658–770, and 863–883; these read SEEQLLPETPCSPSSPSPPPPPA, PETF…DPPK, EKDT…ENEP, and EAGSSPFGVGEDTAFSSRHPV. Residues 486–496 are compositionally biased toward pro residues; it reads PSSPSPPPPPA. A compositionally biased stretch (basic and acidic residues) spans 553–564; sequence EESRENSGHPEA. Over residues 567-576 the composition is skewed to polar residues; that stretch reads PQQSVRTSGQ. Acidic residues predominate over residues 680 to 707; the sequence is EPLEDTSEQQEDTSEQLEDTSELQEDTA. Composition is skewed to polar residues over residues 727–738 and 746–762; these read EAQSLPTSNGPL and ESQPSRESSDLCQNTFS.

It belongs to the FHIP family. In terms of assembly, may be a component of the FTS/Hook/FHIP complex (FHF complex), composed of AKTIP/FTS, FHIP1B, and one or more members of the Hook family of proteins HOOK1, HOOK2, and HOOK3. May interact directly with AKTIP/FTS.

In terms of biological role, probable component of the FTS/Hook/FHIP complex (FHF complex). FHF complex promotes the distribution of AP-4 complex to the perinuclear area of the cell. The sequence is that of FHF complex subunit HOOK-interacting protein 1A from Mus musculus (Mouse).